The primary structure comprises 124 residues: Small ribosomal subunit protein uS12 (124 aa).

3-methylthioaspartic acid is present on aspartate 89.

The protein belongs to the universal ribosomal protein uS12 family. In terms of assembly, part of the 30S ribosomal subunit. Contacts proteins S8 and S17. May interact with IF1 in the 30S initiation complex.

In terms of biological role, with S4 and S5 plays an important role in translational accuracy. Its function is as follows. Interacts with and stabilizes bases of the 16S rRNA that are involved in tRNA selection in the A site and with the mRNA backbone. Located at the interface of the 30S and 50S subunits, it traverses the body of the 30S subunit contacting proteins on the other side and probably holding the rRNA structure together. The combined cluster of proteins S8, S12 and S17 appears to hold together the shoulder and platform of the 30S subunit. This is Small ribosomal subunit protein uS12 from Shewanella baltica (strain OS223).